We begin with the raw amino-acid sequence, 80 residues long: Cell division protein ZapB (80 aa).

Residues 3 to 80 (FEVLEQLESK…ALLGKMDEVE (78 aa)) are a coiled coil.

Belongs to the ZapB family. Homodimer. The ends of the coiled-coil dimer bind to each other, forming polymers. Interacts with FtsZ.

The protein resides in the cytoplasm. Its function is as follows. Non-essential, abundant cell division factor that is required for proper Z-ring formation. It is recruited early to the divisome by direct interaction with FtsZ, stimulating Z-ring assembly and thereby promoting cell division earlier in the cell cycle. Its recruitment to the Z-ring requires functional FtsA or ZipA. The sequence is that of Cell division protein ZapB from Vibrio parahaemolyticus serotype O3:K6 (strain RIMD 2210633).